A 63-amino-acid chain; its full sequence is Large ribosomal subunit protein bL35 (63 aa).

Belongs to the bacterial ribosomal protein bL35 family.

This is Large ribosomal subunit protein bL35 from Sulfurovum sp. (strain NBC37-1).